Here is a 452-residue protein sequence, read N- to C-terminus: Bifunctional protein GlmU (452 aa).

Residues 1–224 (MNIVILAAGQ…EWEVLGVNSK (224 aa)) are pyrophosphorylase. Residues 6-9 (LAAG), K20, Q71, 76-77 (GT), 98-100 (YGD), G134, E149, N164, and N222 each bind UDP-N-acetyl-alpha-D-glucosamine. Position 100 (D100) interacts with Mg(2+). N222 contributes to the Mg(2+) binding site. The tract at residues 225–245 (VQLAELERQHQLNLAGELLVA) is linker. An N-acetyltransferase region spans residues 246–452 (GVRLADPARI…GWERPKKVKK (207 aa)). Positions 328 and 346 each coordinate UDP-N-acetyl-alpha-D-glucosamine. H358 (proton acceptor) is an active-site residue. The UDP-N-acetyl-alpha-D-glucosamine site is built by Y361 and N372. Residues A375, 381 to 382 (NY), S400, A418, and R435 each bind acetyl-CoA.

The protein in the N-terminal section; belongs to the N-acetylglucosamine-1-phosphate uridyltransferase family. This sequence in the C-terminal section; belongs to the transferase hexapeptide repeat family. Homotrimer. Mg(2+) is required as a cofactor.

The protein localises to the cytoplasm. It catalyses the reaction alpha-D-glucosamine 1-phosphate + acetyl-CoA = N-acetyl-alpha-D-glucosamine 1-phosphate + CoA + H(+). The enzyme catalyses N-acetyl-alpha-D-glucosamine 1-phosphate + UTP + H(+) = UDP-N-acetyl-alpha-D-glucosamine + diphosphate. The protein operates within nucleotide-sugar biosynthesis; UDP-N-acetyl-alpha-D-glucosamine biosynthesis; N-acetyl-alpha-D-glucosamine 1-phosphate from alpha-D-glucosamine 6-phosphate (route II): step 2/2. Its pathway is nucleotide-sugar biosynthesis; UDP-N-acetyl-alpha-D-glucosamine biosynthesis; UDP-N-acetyl-alpha-D-glucosamine from N-acetyl-alpha-D-glucosamine 1-phosphate: step 1/1. It functions in the pathway bacterial outer membrane biogenesis; LPS lipid A biosynthesis. In terms of biological role, catalyzes the last two sequential reactions in the de novo biosynthetic pathway for UDP-N-acetylglucosamine (UDP-GlcNAc). The C-terminal domain catalyzes the transfer of acetyl group from acetyl coenzyme A to glucosamine-1-phosphate (GlcN-1-P) to produce N-acetylglucosamine-1-phosphate (GlcNAc-1-P), which is converted into UDP-GlcNAc by the transfer of uridine 5-monophosphate (from uridine 5-triphosphate), a reaction catalyzed by the N-terminal domain. The protein is Bifunctional protein GlmU of Dechloromonas aromatica (strain RCB).